Consider the following 468-residue polypeptide: Chromosomal replication initiator protein DnaA (468 aa).

The segment at 1 to 84 is domain I, interacts with DnaA modulators; sequence MSSSLWLQCL…RFEVGSRPVA (84 aa). Residues 81 to 104 form a disordered region; that stretch reads RPVAAPKPAPTRTPADVAAESSAP. Positions 84-131 are domain II; the sequence is AAPKPAPTRTPADVAAESSAPAQLQARKPVHKTWDDDAQAIADINHRS. The interval 132–348 is domain III, AAA+ region; the sequence is NVNPKHKFNN…GALNRVIANA (217 aa). Residues Gly176, Gly178, Lys179, and Thr180 each coordinate ATP. The segment at 349-468 is domain IV, binds dsDNA; sequence NFTGRPITID…YSNLIRTLSS (120 aa).

The protein belongs to the DnaA family. In terms of assembly, oligomerizes as a right-handed, spiral filament on DNA at oriC.

The protein localises to the cytoplasm. Plays an essential role in the initiation and regulation of chromosomal replication. ATP-DnaA binds to the origin of replication (oriC) to initiate formation of the DNA replication initiation complex once per cell cycle. Binds the DnaA box (a 9 base pair repeat at the origin) and separates the double-stranded (ds)DNA. Forms a right-handed helical filament on oriC DNA; dsDNA binds to the exterior of the filament while single-stranded (ss)DNA is stabiized in the filament's interior. The ATP-DnaA-oriC complex binds and stabilizes one strand of the AT-rich DNA unwinding element (DUE), permitting loading of DNA polymerase. After initiation quickly degrades to an ADP-DnaA complex that is not apt for DNA replication. Binds acidic phospholipids. The protein is Chromosomal replication initiator protein DnaA of Vibrio campbellii (strain ATCC BAA-1116).